The primary structure comprises 251 residues: Small ribosomal subunit protein uS3 (251 aa).

A KH type-2 domain is found at 22–93 (LNEFFTRELA…GIAIYAERVE (72 aa)). The segment at 223–251 (TVKSYKQTAEDETETDAPVEAEAEVEATA) is disordered. Positions 232–251 (EDETETDAPVEAEAEVEATA) are enriched in acidic residues.

Belongs to the universal ribosomal protein uS3 family. As to quaternary structure, component of the small ribosomal subunit. Mature ribosomes consist of a small (40S) and a large (60S) subunit. The 40S subunit contains about 32 different proteins and 1 molecule of RNA (18S). The 60S subunit contains 45 different proteins and 3 molecules of RNA (25S, 5.8S and 5S).

It localises to the cytoplasm. Component of the ribosome, a large ribonucleoprotein complex responsible for the synthesis of proteins in the cell. The small ribosomal subunit (SSU) binds messenger RNAs (mRNAs) and translates the encoded message by selecting cognate aminoacyl-transfer RNA (tRNA) molecules. The large subunit (LSU) contains the ribosomal catalytic site termed the peptidyl transferase center (PTC), which catalyzes the formation of peptide bonds, thereby polymerizing the amino acids delivered by tRNAs into a polypeptide chain. The nascent polypeptides leave the ribosome through a tunnel in the LSU and interact with protein factors that function in enzymatic processing, targeting, and the membrane insertion of nascent chains at the exit of the ribosomal tunnel. This Candida albicans (strain SC5314 / ATCC MYA-2876) (Yeast) protein is Small ribosomal subunit protein uS3 (RPS3).